The following is a 154-amino-acid chain: Small ribosomal subunit protein uS13 (154 aa).

Belongs to the universal ribosomal protein uS13 family.

Its subcellular location is the cytoplasm. In terms of biological role, located at the top of the head of the 40S subunit, it contacts several helices of the 18S rRNA. This Dictyostelium discoideum (Social amoeba) protein is Small ribosomal subunit protein uS13 (rps18).